Consider the following 262-residue polypeptide: Oxidoreductase GME11367 (262 aa).

This sequence belongs to the avfA family.

The protein operates within secondary metabolite biosynthesis. Functionally, oxidoreductase; part of the gene cluster that mediates the biosynthesis of dibenzodioxocinones such as pestalotiollide B, a novel class of inhibitors against cholesterol ester transfer protein (CEPT). The biosynthesis initiates from condensation of acetate and malonate units catalyzed by the non-reducing PKS pks8/GME11356. Pks8/GME11356 lacks a thioesterase (TE) domain, which is important to the cyclizing of the third ring of atrochrysone carboxylic acid, and the esterase GME11355 might play the role of TE and catalyzes the cyclization reaction of the C ring. The lactamase-like protein GME11357 (or other beta-lactamases in Pestalotiopsis microspora) probably hydrolyzes the thioester bond between the ACP of pks8/GME11356 and the intermediate to release atrochrysone carboxylic acid, which is spontaneously dehydrates to form endocrocin anthrone. Endocrocin anthrone is further converted to emodin via the endocrocin intermediate. Emodin is then oxidized by several enzymes such as the Baeyer-Villiger oxidase GME11358, the oxidoreductase GME11367, the short chain dehydrogenase/reductase GME11373, as well as by other oxidoreductases from the cluster, to modify the A and C rings and open the B ring, and finally yield monodictyphenone. The prenyltransferase GME11375 may catalyze the addition reaction between the C5 side chains and the carbon bone of dibenzodioxocinones. The remaining biochemical reactions to the final product dibenzodioxocinones should be methylation catalyzed by methyltransferase GME11366 and reduction and lactonization reaction catalyzed by a series of oxidordeuctases. In Pestalotiopsis microspora, this protein is Oxidoreductase GME11367.